We begin with the raw amino-acid sequence, 223 residues long: Putative nudix hydrolase 2 (223 aa).

The Nudix hydrolase domain maps to 72-213 (ASADGVSIIA…SIVVESTLLA (142 aa)). The Nudix box signature appears at 111–132 (GLIDAGETAQQAAIRELKEETG). 2 residues coordinate Mg(2+): E126 and E130.

The protein belongs to the Nudix hydrolase family. It depends on Mg(2+) as a cofactor. Requires Mn(2+) as cofactor.

In terms of biological role, probably mediates the hydrolysis of some nucleoside diphosphate derivatives. This chain is Putative nudix hydrolase 2 (ndx-2), found in Caenorhabditis elegans.